Reading from the N-terminus, the 47-residue chain is Small, acid-soluble spore protein N (47 aa).

The segment at 1 to 47 (MSNPRGNPKYFNPNHLGTQPRAAGGNKGKKMQDQSGQHAQVIQTKGE) is disordered. Positions 33–47 (DQSGQHAQVIQTKGE) are enriched in polar residues.

The protein belongs to the SspN family.

The protein resides in the spore core. The protein is Small, acid-soluble spore protein N of Geobacillus sp. (strain WCH70).